The following is a 713-amino-acid chain: Cadherin-13 (713 aa).

The first 22 residues, 1–22 (MQPRTPLVLCVLLSQVLLLTSA), serve as a signal peptide directing secretion. Residues 23–138 (EDLDCIPGFQ…RTSPVPRQKR (116 aa)) constitute a propeptide that is removed on maturation. Asn-52 and Asn-86 each carry an N-linked (GlcNAc...) asparagine glycan. 5 consecutive Cadherin domains span residues 139–245 (SIVV…RPIF), 246–363 (REGP…SPKF), 364–477 (TKKE…GPVF), 478–585 (YPDP…APFI), and 584–690 (FIYP…VDSN). Asn-382, Asn-489, Asn-500, Asn-530, Asn-598, Asn-638, and Asn-671 each carry an N-linked (GlcNAc...) asparagine glycan. A lipid anchor (GPI-anchor amidated asparagine) is attached at Asn-690. Positions 691-713 (AVGALRFSLPSLLLLSLFSLACL) are cleaved as a propeptide — removed in mature form.

In terms of assembly, by contrast to classical cadherins, homodimerization in trans is not mediated by cadherin EC1 domain strand-swapping, but instead through a homophilic adhesive interface which joins two elongated EC1-EC2 domains through a region near their Ca2+-binding sites to form a tetrahedral, X-like shape.

It is found in the cell membrane. Its subcellular location is the cytoplasm. Cadherins are calcium-dependent cell adhesion proteins. They preferentially interact with themselves in a homophilic manner in connecting cells; cadherins may thus contribute to the sorting of heterogeneous cell types. May act as a negative regulator of neural cell growth. The protein is Cadherin-13 (CDH13) of Pongo abelii (Sumatran orangutan).